Reading from the N-terminus, the 130-residue chain is Small ribosomal subunit protein uS9 (130 aa).

Belongs to the universal ribosomal protein uS9 family.

The chain is Small ribosomal subunit protein uS9 from Xanthomonas campestris pv. campestris (strain 8004).